A 59-amino-acid chain; its full sequence is UPF0391 membrane protein LPC_1949 (59 aa).

Transmembrane regions (helical) follow at residues 5–25 (ALIF…GIAV) and 30–50 (IAKI…IMGL).

Belongs to the UPF0391 family.

The protein localises to the cell membrane. This is UPF0391 membrane protein LPC_1949 from Legionella pneumophila (strain Corby).